We begin with the raw amino-acid sequence, 58 residues long: Basic phospholipase A2 homolog PocTX (58 aa).

Cys29 and Cys45 are joined by a disulfide.

Expressed by the venom gland.

It localises to the secreted. Its function is as follows. Wasp venom phospholipase A2 homolog that lacks enzymatic activity. The polypeptide is Basic phospholipase A2 homolog PocTX (Polybia occidentalis (Paper wasp)).